We begin with the raw amino-acid sequence, 131 residues long: Ribosome-binding factor A (131 aa).

It belongs to the RbfA family. Monomer. Binds 30S ribosomal subunits, but not 50S ribosomal subunits or 70S ribosomes.

It is found in the cytoplasm. In terms of biological role, one of several proteins that assist in the late maturation steps of the functional core of the 30S ribosomal subunit. Associates with free 30S ribosomal subunits (but not with 30S subunits that are part of 70S ribosomes or polysomes). Required for efficient processing of 16S rRNA. May interact with the 5'-terminal helix region of 16S rRNA. This is Ribosome-binding factor A from Christiangramia forsetii (strain DSM 17595 / CGMCC 1.15422 / KT0803) (Gramella forsetii).